Reading from the N-terminus, the 65-residue chain is Small ribosomal subunit protein eS27 (65 aa).

Residues cysteine 20, cysteine 23, cysteine 39, and cysteine 42 each coordinate Zn(2+). The C4-type zinc-finger motif lies at 20 to 42 (CIDCGNEQIVFSHPATRVRCNVC).

Belongs to the eukaryotic ribosomal protein eS27 family. Part of the 30S ribosomal subunit. The cofactor is Zn(2+).

This is Small ribosomal subunit protein eS27 from Pyrococcus abyssi (strain GE5 / Orsay).